Reading from the N-terminus, the 242-residue chain is ATP-dependent dethiobiotin synthetase BioD 1 (242 aa).

12–17 (NVGKTT) contributes to the ATP binding site. Threonine 16 serves as a coordination point for Mg(2+). Lysine 37 is an active-site residue. Aspartate 66 contributes to the ATP binding site. The Mg(2+) site is built by aspartate 66 and glutamate 124. ATP-binding positions include 184–185 (NR), 213–215 (PYL), and glutamate 220.

It belongs to the dethiobiotin synthetase family. As to quaternary structure, homodimer. It depends on Mg(2+) as a cofactor.

The protein resides in the cytoplasm. It carries out the reaction (7R,8S)-7,8-diammoniononanoate + CO2 + ATP = (4R,5S)-dethiobiotin + ADP + phosphate + 3 H(+). Its pathway is cofactor biosynthesis; biotin biosynthesis; biotin from 7,8-diaminononanoate: step 1/2. Functionally, catalyzes a mechanistically unusual reaction, the ATP-dependent insertion of CO2 between the N7 and N8 nitrogen atoms of 7,8-diaminopelargonic acid (DAPA, also called 7,8-diammoniononanoate) to form a ureido ring. The sequence is that of ATP-dependent dethiobiotin synthetase BioD 1 from Haemophilus influenzae (strain ATCC 51907 / DSM 11121 / KW20 / Rd).